Here is a 76-residue protein sequence, read N- to C-terminus: Heat shock factor-binding protein 1 (76 aa).

This sequence belongs to the HSBP1 family. Homohexamer. Associates with heptad repeats of HSF1 trimers and probably also HSF1 monomers, and with HSP70. Association with HSF1 trimers and HSP70 coincides with attenuation of heat shock response and the conversion of HSF1 trimer to monomer.

The protein resides in the nucleus. In terms of biological role, negative regulator of the heat shock response. Negatively affects HSF1 DNA-binding activity. May have a role in the suppression of the activation of the stress response during the aging process. The chain is Heat shock factor-binding protein 1 (HSBP1) from Homo sapiens (Human).